Reading from the N-terminus, the 874-residue chain is Alanine--tRNA ligase (874 aa).

Residues His563, His567, Cys664, and His668 each coordinate Zn(2+).

It belongs to the class-II aminoacyl-tRNA synthetase family. Requires Zn(2+) as cofactor.

It localises to the cytoplasm. The catalysed reaction is tRNA(Ala) + L-alanine + ATP = L-alanyl-tRNA(Ala) + AMP + diphosphate. In terms of biological role, catalyzes the attachment of alanine to tRNA(Ala) in a two-step reaction: alanine is first activated by ATP to form Ala-AMP and then transferred to the acceptor end of tRNA(Ala). Also edits incorrectly charged Ser-tRNA(Ala) and Gly-tRNA(Ala) via its editing domain. In Methylobacillus flagellatus (strain ATCC 51484 / DSM 6875 / VKM B-1610 / KT), this protein is Alanine--tRNA ligase.